A 273-amino-acid polypeptide reads, in one-letter code: Putative phosphoenolpyruvate synthase regulatory protein (273 aa).

Residue 153–160 (GVSRSGKT) coordinates ADP.

This sequence belongs to the pyruvate, phosphate/water dikinase regulatory protein family. PSRP subfamily.

The enzyme catalyses [pyruvate, water dikinase] + ADP = [pyruvate, water dikinase]-phosphate + AMP + H(+). It carries out the reaction [pyruvate, water dikinase]-phosphate + phosphate + H(+) = [pyruvate, water dikinase] + diphosphate. Functionally, bifunctional serine/threonine kinase and phosphorylase involved in the regulation of the phosphoenolpyruvate synthase (PEPS) by catalyzing its phosphorylation/dephosphorylation. The sequence is that of Putative phosphoenolpyruvate synthase regulatory protein from Polaromonas naphthalenivorans (strain CJ2).